A 62-amino-acid chain; its full sequence is Large ribosomal subunit protein uL29 (62 aa).

This sequence belongs to the universal ribosomal protein uL29 family.

The chain is Large ribosomal subunit protein uL29 from Chromobacterium violaceum (strain ATCC 12472 / DSM 30191 / JCM 1249 / CCUG 213 / NBRC 12614 / NCIMB 9131 / NCTC 9757 / MK).